Consider the following 607-residue polypeptide: MNLQEMNARKEKIRNFSIIAHIDHGKSTLADRILEQTETVSKREMQAQLLDSMDLERERGITIKLNAIELNYKAKDGETYIFHLIDTPGHVDFTYEVSRSLAACEGAILVVDAAQGIEAQTLANVYLALDNDLEILPVINKIDLPAADPEMVRQEIEDVIGLDASEAVLASAKAGIGIEEILEQIVEKVPAPQGEVDAPLKALIFDSVYDAYRGVILQIRVIDGSVKVGDRIQLMSNGKEFDVTEVGIFTPKAVSRDFLMAGDVGYVAAAIKTVADTRVGDTVTLASNPATEALEGYKEMNPMVFAGIYPIESNKFNDLREALEKLQLNDASLRFEPETSQALGFGFRCGFLGLLHMDVIQERLEREFGIDLIMTAPSVVYHINTTDGETLEVANPSEFPDPTRIENIEEPFVKAQIMVPNDFVGPVMELAQRKRGIFLTMDYLDANRVNIIYHIPLSEIVFDFFDKLKSSTKGYASFDYEISDYRPSNLVKMDILLNAEKVDALSFIVHKDFAFERGKVIVEKLKKLIPRQQFEVPIQATIGNKIVARSDIKALRKNVLAKCYGGDISRKRKLLEKQKAGKKRMKAIGSVEVPQEAFLSVLSMDEE.

One can recognise a tr-type G domain in the interval 11–193 (EKIRNFSIIA…QIVEKVPAPQ (183 aa)). GTP-binding positions include 23-28 (DHGKST) and 140-143 (NKID).

This sequence belongs to the TRAFAC class translation factor GTPase superfamily. Classic translation factor GTPase family. LepA subfamily.

It is found in the cell membrane. The catalysed reaction is GTP + H2O = GDP + phosphate + H(+). Its function is as follows. Required for accurate and efficient protein synthesis under certain stress conditions. May act as a fidelity factor of the translation reaction, by catalyzing a one-codon backward translocation of tRNAs on improperly translocated ribosomes. Back-translocation proceeds from a post-translocation (POST) complex to a pre-translocation (PRE) complex, thus giving elongation factor G a second chance to translocate the tRNAs correctly. Binds to ribosomes in a GTP-dependent manner. This Lactococcus lactis subsp. cremoris (strain MG1363) protein is Elongation factor 4.